The sequence spans 388 residues: Protein TsgA homolog (388 aa).

Helical transmembrane passes span 12–32 (CISF…GIFL), 51–71 (TFLN…TNII), 77–97 (LIFG…SHNL), 102–122 (ISMF…TYII), 137–157 (LTDS…ALII), 163–183 (WYWV…ITIN), 203–223 (FSIL…LSFI), 246–266 (SAFW…LKFF), 272–292 (IITL…FYDY), 294–314 (LLYI…TIII), 331–351 (YILT…GPIV), and 356–376 (IFSA…LVII).

The protein belongs to the major facilitator superfamily. TsgA family.

It localises to the cell membrane. This Buchnera aphidicola subsp. Baizongia pistaciae (strain Bp) protein is Protein TsgA homolog.